Reading from the N-terminus, the 427-residue chain is Glutamate-1-semialdehyde 2,1-aminomutase (427 aa).

An N6-(pyridoxal phosphate)lysine modification is found at Lys-265.

It belongs to the class-III pyridoxal-phosphate-dependent aminotransferase family. HemL subfamily. Homodimer. The cofactor is pyridoxal 5'-phosphate.

The protein resides in the cytoplasm. The enzyme catalyses (S)-4-amino-5-oxopentanoate = 5-aminolevulinate. It functions in the pathway porphyrin-containing compound metabolism; protoporphyrin-IX biosynthesis; 5-aminolevulinate from L-glutamyl-tRNA(Glu): step 2/2. The polypeptide is Glutamate-1-semialdehyde 2,1-aminomutase (Burkholderia vietnamiensis (strain G4 / LMG 22486) (Burkholderia cepacia (strain R1808))).